The following is a 339-amino-acid chain: Anthranilate phosphoribosyltransferase (339 aa).

Residues Gly-82, 85–86 (GD), Thr-90, 92–95 (NIST), 110–118 (KHGNRSASG), and Ser-122 each bind 5-phospho-alpha-D-ribose 1-diphosphate. Residue Gly-82 participates in anthranilate binding. Ser-94 is a binding site for Mg(2+). Asn-113 is an anthranilate binding site. Arg-168 lines the anthranilate pocket. Mg(2+) contacts are provided by Asp-226 and Glu-227.

This sequence belongs to the anthranilate phosphoribosyltransferase family. Homodimer. Mg(2+) is required as a cofactor.

The enzyme catalyses N-(5-phospho-beta-D-ribosyl)anthranilate + diphosphate = 5-phospho-alpha-D-ribose 1-diphosphate + anthranilate. Its pathway is amino-acid biosynthesis; L-tryptophan biosynthesis; L-tryptophan from chorismate: step 2/5. Its function is as follows. Catalyzes the transfer of the phosphoribosyl group of 5-phosphorylribose-1-pyrophosphate (PRPP) to anthranilate to yield N-(5'-phosphoribosyl)-anthranilate (PRA). The chain is Anthranilate phosphoribosyltransferase from Methanosphaerula palustris (strain ATCC BAA-1556 / DSM 19958 / E1-9c).